Reading from the N-terminus, the 84-residue chain is Polcalcin Nic t 1 (84 aa).

2 consecutive EF-hand domains span residues Q6–S40 and V41–L76. Ca(2+) contacts are provided by D19, N21, D23, K25, E30, D54, D56, D58, and E65.

The sequence is that of Polcalcin Nic t 1 (Nict1) from Nicotiana tabacum (Common tobacco).